The chain runs to 260 residues: Uroplakin-1b (260 aa).

The Cytoplasmic portion of the chain corresponds to 2 to 15; sequence AKDDSTVRCFQGLL. The chain crosses the membrane as a helical span at residues 16 to 36; sequence IFGNVIIGMCSIALMAECIFF. The Extracellular portion of the chain corresponds to 37 to 60; that stretch reads VSDQNSLYPLLEATNNDDIYAAAW. A helical membrane pass occupies residues 61–81; sequence IGMFVGICLFCLSVLGIVGIM. Topologically, residues 82–86 are cytoplasmic; that stretch reads KSNRK. Residues 87 to 107 form a helical membrane-spanning segment; it reads ILLVYFILMFIVYAFEVASCI. At 108-229 the chain is on the extracellular side; the sequence is TAATQRDFFT…ELISGPMNRH (122 aa). A helical transmembrane segment spans residues 230 to 250; that stretch reads AWGVAWFGFAILCWTFWVLLG. Residues 251–260 are Cytoplasmic-facing; the sequence is TMFYWSRIDY.

Belongs to the tetraspanin (TM4SF) family. In terms of assembly, heterodimer with uroplakin-3A (UPK3A) or uroplakin-3B (UPK3B). Post-translationally, N-glycosylated with high-mannose oligosaccharides. Bladder epithelium.

It localises to the membrane. Functionally, component of the asymmetric unit membrane (AUM); a highly specialized biomembrane elaborated by terminally differentiated urothelial cells. May play an important role in normal bladder epithelial physiology, possibly in regulating membrane permeability of superficial umbrella cells or in stabilizing the apical membrane through AUM/cytoskeletal interactions. The sequence is that of Uroplakin-1b (UPK1B) from Bos taurus (Bovine).